The chain runs to 182 residues: CDP-diacylglycerol--glycerol-3-phosphate 3-phosphatidyltransferase (182 aa).

The Cytoplasmic portion of the chain corresponds to 2-12 (QFNIPTLLTLF). The chain crosses the membrane as a helical span at residues 13–37 (RVILIPFFVLVFYLPVTWSPFAAAL). Topologically, residues 38-60 (IFCVAAVTDWFDGFLARRWNQST) are periplasmic. Residues 61-81 (RFGAFLDPVADKVLVAIAMVL) traverse the membrane as a helical segment. At 82–86 (VTEHY) the chain is on the cytoplasmic side. The helical transmembrane segment at 87–107 (HSWWVTLPAATMIAREIIISA) threads the bilayer. The Periplasmic portion of the chain corresponds to 108 to 145 (LREWMAELGKRSSVAVSWIGKVKTTAQMVALAWLLWRP). The chain crosses the membrane as a helical span at residues 146–168 (NIWVEYVGIALFFVAAVLTLWSM). Topologically, residues 169-181 (LQYLSAARADLLD) are cytoplasmic.

It belongs to the CDP-alcohol phosphatidyltransferase class-I family.

It is found in the cell inner membrane. It catalyses the reaction a CDP-1,2-diacyl-sn-glycerol + sn-glycerol 3-phosphate = a 1,2-diacyl-sn-glycero-3-phospho-(1'-sn-glycero-3'-phosphate) + CMP + H(+). It functions in the pathway phospholipid metabolism; phosphatidylglycerol biosynthesis; phosphatidylglycerol from CDP-diacylglycerol: step 1/2. Catalyzes the conversion of cytidine diphosphate diacylglycerol (CDP-DG) and glycerol 3-phosphate into phosphatidylglycerol. Essential for the synthesis of anionic phospholipids, thereby playing a role in balancing the ratio of zwitterionic and anionic phospholipids, which is thought to be important for normal membrane function. The sequence is that of CDP-diacylglycerol--glycerol-3-phosphate 3-phosphatidyltransferase from Shigella boydii serotype 4 (strain Sb227).